Consider the following 356-residue polypeptide: Outer membrane protein Omp38 (356 aa).

Positions 1 to 19 are cleaved as a signal peptide; it reads MKLSRIALATMLVAAPLAA. An OmpA-like domain is found at 221-339; sequence ELTEDLNMEL…RVFATITGSR (119 aa).

This sequence belongs to the outer membrane OOP (TC 1.B.6) superfamily. As to quaternary structure, homotrimer.

The protein localises to the cell outer membrane. Functionally, porin. Induces apoptosis in human cells through caspases-dependent and AIF-dependent pathways. Purified Omp38 enters the cells and localizes to the mitochondria, which leads to a release of proapoptotic molecules such as cytochrome c and AIF (apoptosis-inducing factor). The sequence is that of Outer membrane protein Omp38 (omp38) from Acinetobacter baumannii (strain ATCC 17978 / DSM 105126 / CIP 53.77 / LMG 1025 / NCDC KC755 / 5377).